Consider the following 305-residue polypeptide: Transcriptional activator protein PfeR (305 aa).

Positions 79-192 (RLLLVEDDPR…ELDARTDALL (114 aa)) constitute a Response regulatory domain. D128 is subject to 4-aspartylphosphate. A DNA-binding region (ompR/PhoB-type) is located at residues 200–301 (LPLAQRRDTR…VRGQGYLLVE (102 aa)).

In terms of processing, phosphorylated by PfeS.

The protein localises to the cytoplasm. Functionally, member of the two-component regulatory system PfeR/PfeS. Activates expression of the ferric enterobactin receptor. The chain is Transcriptional activator protein PfeR (pfeR) from Pseudomonas aeruginosa (strain ATCC 15692 / DSM 22644 / CIP 104116 / JCM 14847 / LMG 12228 / 1C / PRS 101 / PAO1).